The primary structure comprises 633 residues: Sodium- and chloride-dependent glycine transporter 1 (633 aa).

The Cytoplasmic segment spans residues 1-30; it reads MGLCVNGAVPSEATKKDENLKRGNWGNQIE. A run of 3 helical transmembrane segments spans residues 31–51, 58–78, and 113–133; these read FVLTSVGYAVGLGNVWRFPYL, GAFMFPYFIMLIFCGIPLFFM, and YIGIYYNVVICIAFYYFFASM. Residues 134 to 208 are Extracellular-facing; the sequence is NRVLPWTYCN…ISEDIGDFGE (75 aa). N-linked (GlcNAc...) asparagine glycans are attached at residues asparagine 158, asparagine 164, asparagine 173, and asparagine 179. A run of 9 helical transmembrane segments spans residues 209–229, 238–258, 283–303, 330–350, 373–393, 429–449, 453–473, 493–513, and 533–553; these read VQLPLLGCLGVSWLVVFLCLI, VVYFTATFPYVVLTILFIRGI, VWGDAASQIFYSLGCAWGGLI, SVYAGFVIFSILGFMATHLGV, LLPISPLWSILFFFMLILLGL, IIGFLLGIPLTTQAGIYWLLL, YAASFSLVIISCIMCIAVMYI, LFFQICWRFISPGIIFFILIF, and ITIGFLMALSSVICIPLYAIF. Residues 554–633 lie on the Cytoplasmic side of the membrane; sequence KIWCSEGDTF…GQAHTQDSKV (80 aa). A disordered region spans residues 588–633; that stretch reads RYAQMSSTRSESNPEAQPLNPEKMKEDLSLTIQGSNGQAHTQDSKV. 2 stretches are compositionally biased toward polar residues: residues 591-602 and 617-633; these read QMSSTRSESNPE and LTIQGSNGQAHTQDSKV.

The protein belongs to the sodium:neurotransmitter symporter (SNF) (TC 2.A.22) family. SLC6A9 subfamily. As to expression, first expressed in early tailbud stage embryos in the midbrain and anterior spinal cord, and weakly in the hindbrain. By late tailbud stages, expression extends posteriorly in the spinal cord to appear in between somites. Expressed in the forebrain, retina, between the somites and in the blood islands by the swimming tadpole stages.

It is found in the cell membrane. The catalysed reaction is glycine(out) + chloride(out) + 2 Na(+)(out) = glycine(in) + chloride(in) + 2 Na(+)(in). In terms of biological role, sodium- and chloride-dependent glycine transporter which is essential for regulating glycine concentrations at inhibitory glycinergic synapses. The sequence is that of Sodium- and chloride-dependent glycine transporter 1 from Xenopus laevis (African clawed frog).